Reading from the N-terminus, the 445-residue chain is Tubulin beta-2A chain (445 aa).

Residues 1–4 carry the MREI motif motif; it reads MREI. Residue glutamine 11 participates in GTP binding. The residue at position 40 (serine 40) is a Phosphoserine. Residue lysine 58 is modified to N6-acetyllysine; alternate. Position 58 is an N6-succinyllysine; alternate (lysine 58). Lysine 58 is covalently cross-linked (Glycyl lysine isopeptide (Lys-Gly) (interchain with G-Cter in ubiquitin); alternate). Positions 69, 138, 142, 143, and 144 each coordinate GTP. Glutamate 69 contributes to the Mg(2+) binding site. Position 172 is a phosphoserine; by CDK1 (serine 172). GTP-binding residues include asparagine 204 and asparagine 226. Phosphothreonine occurs at positions 285 and 290. Arginine 318 is subject to Omega-N-methylarginine. A Glycyl lysine isopeptide (Lys-Gly) (interchain with G-Cter in ubiquitin) cross-link involves residue lysine 324. Residues 422–445 form a disordered region; the sequence is YQQYQDATADEQGEFEEEEGEDEA. The span at 429–445 shows a compositional bias: acidic residues; sequence TADEQGEFEEEEGEDEA. The residue at position 438 (glutamate 438) is a 5-glutamyl polyglutamate.

This sequence belongs to the tubulin family. In terms of assembly, interacts with ZNRF1. Part of a complex composed at least of ASH2L, EMSY, HCFC1, HSPA8, CCAR2, MATR3, MKI67, RBBP5, TUBB2A, WDR5 and ZNF335; this complex may have a histone H3-specific methyltransferase activity. Dimer of alpha and beta chains. A typical microtubule is a hollow water-filled tube with an outer diameter of 25 nm and an inner diameter of 15 nM. Alpha-beta heterodimers associate head-to-tail to form protofilaments running lengthwise along the microtubule wall with the beta-tubulin subunit facing the microtubule plus end conferring a structural polarity. Microtubules usually have 13 protofilaments but different protofilament numbers can be found in some organisms and specialized cells. Mg(2+) is required as a cofactor. In terms of processing, some glutamate residues at the C-terminus are polyglutamylated, resulting in polyglutamate chains on the gamma-carboxyl group. Polyglutamylation plays a key role in microtubule severing by spastin (SPAST). SPAST preferentially recognizes and acts on microtubules decorated with short polyglutamate tails: severing activity by SPAST increases as the number of glutamates per tubulin rises from one to eight, but decreases beyond this glutamylation threshold. Glutamylation is also involved in cilia motility. Post-translationally, some glutamate residues at the C-terminus are monoglycylated but not polyglycylated due to the absence of functional TTLL10 in human. Monoglycylation is mainly limited to tubulin incorporated into cilia and flagella axonemes, which is required for their stability and maintenance. Flagella glycylation controls sperm motility. Both polyglutamylation and monoglycylation can coexist on the same protein on adjacent residues, and lowering glycylation levels increases polyglutamylation, and reciprocally. Phosphorylated on Ser-172 by CDK1 during the cell cycle, from metaphase to telophase, but not in interphase. This phosphorylation inhibits tubulin incorporation into microtubules. High expression in brain, where it represents 30% of all beta-tubulins.

The protein resides in the cytoplasm. Its subcellular location is the cytoskeleton. In terms of biological role, tubulin is the major constituent of microtubules, a cylinder consisting of laterally associated linear protofilaments composed of alpha- and beta-tubulin heterodimers. Microtubules grow by the addition of GTP-tubulin dimers to the microtubule end, where a stabilizing cap forms. Below the cap, tubulin dimers are in GDP-bound state, owing to GTPase activity of alpha-tubulin. This chain is Tubulin beta-2A chain (TUBB2A), found in Homo sapiens (Human).